The following is a 308-amino-acid chain: Transcriptional adapter 1-1 (308 aa).

This sequence belongs to the TADA1 family. In terms of assembly, component of the Spt-Ada-Gcn5 acetyltransferase (SAGA) complex consisting of wda/Taf5L, Saf6, Taf9, Taf10b, Taf12, Ada1, Spt3, Spt7, Spt20, Sf3b3, Sf3b5, Nipped-A/Tra1, a histone acetyltransferase (HAT) module made up of Gcn5, Ada2b (Isoform B), Ada3 and Sgf29, and a deubiquitinase (DUB) module made up of not/nonstop, Sgf11 and e(y)2 tethered to SAGA by Atxn7. Not a component of the Ada2a-containing ATAC complex.

It is found in the nucleus. Its function is as follows. Component of the transcription regulatory complex SAGA, a multiprotein complex that activates transcription by remodeling chromatin and mediating histone acetylation and deubiquitination. The SAGA complex predominantly acetylates histone H3. This is Transcriptional adapter 1-1 from Drosophila melanogaster (Fruit fly).